Reading from the N-terminus, the 119-residue chain is MTQTGKSNIEAKAFARYITMSPYKVRRIVDQIRGRSYEEALMILQFMPYRACNPVLKVLYSAAANAKHNLGLNKSELSISEVKVDQGPVMKRFQPRAQGRGYPIRKPTCHISLTVKGLK.

Belongs to the universal ribosomal protein uL22 family. Part of the 50S ribosomal subunit.

It localises to the plastid. The protein localises to the chloroplast. Functionally, this protein binds specifically to 23S rRNA. The globular domain of the protein is located near the polypeptide exit tunnel on the outside of the subunit, while an extended beta-hairpin is found that lines the wall of the exit tunnel in the center of the 70S ribosome. The chain is Large ribosomal subunit protein uL22c (rpl22) from Chlorokybus atmophyticus (Soil alga).